The primary structure comprises 860 residues: Late endosome and vacuole interface protein 11 (860 aa).

The tract at residues 19–45 (EIINNSDHSSSHSTSHEEEDEEEDDTE) is disordered. The segment covering 20-31 (IINNSDHSSSHS) has biased composition (low complexity). The span at 35–45 (EEEDEEEDDTE) shows a compositional bias: acidic residues. Residues 84-138 (KNIAKFWSHFLAIEKKLTKVKCKHCGEILTRSDASLTKTFRSHLKTKHNISANKN) form a BED-type zinc finger. C105, C108, H126, and H131 together coordinate Zn(2+).

It belongs to the VID22 family.

The protein localises to the nucleus. Involved in vacuolar processing and morphology. This chain is Late endosome and vacuole interface protein 11 (ENV11), found in Saccharomyces cerevisiae (strain ATCC 204508 / S288c) (Baker's yeast).